The chain runs to 156 residues: Small ribosomal subunit protein uS7 (156 aa).

The protein belongs to the universal ribosomal protein uS7 family. In terms of assembly, part of the 30S ribosomal subunit. Contacts proteins S9 and S11.

In terms of biological role, one of the primary rRNA binding proteins, it binds directly to 16S rRNA where it nucleates assembly of the head domain of the 30S subunit. Is located at the subunit interface close to the decoding center, probably blocks exit of the E-site tRNA. The protein is Small ribosomal subunit protein uS7 of Picosynechococcus sp. (strain ATCC 27264 / PCC 7002 / PR-6) (Agmenellum quadruplicatum).